The primary structure comprises 345 residues: Glycerol-3-phosphate dehydrogenase [NAD(P)+] (345 aa).

Residues Ser-23, Tyr-24, His-44, and Lys-118 each coordinate NADPH. The sn-glycerol 3-phosphate site is built by Lys-118, Gly-147, and Thr-149. Residue Ala-151 coordinates NADPH. 5 residues coordinate sn-glycerol 3-phosphate: Lys-203, Asp-256, Ser-266, Arg-267, and Asn-268. Lys-203 (proton acceptor) is an active-site residue. NADPH is bound at residue Arg-267. NADPH-binding residues include Val-291 and Glu-293.

The protein belongs to the NAD-dependent glycerol-3-phosphate dehydrogenase family.

Its subcellular location is the cytoplasm. The enzyme catalyses sn-glycerol 3-phosphate + NAD(+) = dihydroxyacetone phosphate + NADH + H(+). The catalysed reaction is sn-glycerol 3-phosphate + NADP(+) = dihydroxyacetone phosphate + NADPH + H(+). The protein operates within membrane lipid metabolism; glycerophospholipid metabolism. Catalyzes the reduction of the glycolytic intermediate dihydroxyacetone phosphate (DHAP) to sn-glycerol 3-phosphate (G3P), the key precursor for phospholipid synthesis. This is Glycerol-3-phosphate dehydrogenase [NAD(P)+] from Vibrio parahaemolyticus serotype O3:K6 (strain RIMD 2210633).